Consider the following 376-residue polypeptide: Queuine tRNA-ribosyltransferase (376 aa).

The active-site Proton acceptor is the aspartate 93. Substrate is bound by residues 93-97, aspartate 147, glutamine 190, and glycine 217; that span reads DSGGF. An RNA binding region spans residues 248–254; sequence GVGKPDD. Aspartate 267 (nucleophile) is an active-site residue. Positions 305, 307, 310, and 336 each coordinate Zn(2+).

This sequence belongs to the queuine tRNA-ribosyltransferase family. Homodimer. Within each dimer, one monomer is responsible for RNA recognition and catalysis, while the other monomer binds to the replacement base PreQ1. Requires Zn(2+) as cofactor.

The catalysed reaction is 7-aminomethyl-7-carbaguanine + guanosine(34) in tRNA = 7-aminomethyl-7-carbaguanosine(34) in tRNA + guanine. It participates in tRNA modification; tRNA-queuosine biosynthesis. Catalyzes the base-exchange of a guanine (G) residue with the queuine precursor 7-aminomethyl-7-deazaguanine (PreQ1) at position 34 (anticodon wobble position) in tRNAs with GU(N) anticodons (tRNA-Asp, -Asn, -His and -Tyr). Catalysis occurs through a double-displacement mechanism. The nucleophile active site attacks the C1' of nucleotide 34 to detach the guanine base from the RNA, forming a covalent enzyme-RNA intermediate. The proton acceptor active site deprotonates the incoming PreQ1, allowing a nucleophilic attack on the C1' of the ribose to form the product. After dissociation, two additional enzymatic reactions on the tRNA convert PreQ1 to queuine (Q), resulting in the hypermodified nucleoside queuosine (7-(((4,5-cis-dihydroxy-2-cyclopenten-1-yl)amino)methyl)-7-deazaguanosine). The protein is Queuine tRNA-ribosyltransferase of Cereibacter sphaeroides (strain ATCC 17029 / ATH 2.4.9) (Rhodobacter sphaeroides).